The sequence spans 300 residues: Ribosomal protein L11 methyltransferase (300 aa).

Residues T152, G173, D195, and N234 each coordinate S-adenosyl-L-methionine.

It belongs to the methyltransferase superfamily. PrmA family.

It localises to the cytoplasm. The enzyme catalyses L-lysyl-[protein] + 3 S-adenosyl-L-methionine = N(6),N(6),N(6)-trimethyl-L-lysyl-[protein] + 3 S-adenosyl-L-homocysteine + 3 H(+). Functionally, methylates ribosomal protein L11. In Paraburkholderia phytofirmans (strain DSM 17436 / LMG 22146 / PsJN) (Burkholderia phytofirmans), this protein is Ribosomal protein L11 methyltransferase.